The chain runs to 61 residues: UPF0434 protein Bfl377 (61 aa).

The protein belongs to the UPF0434 family.

This is UPF0434 protein Bfl377 from Blochmanniella floridana.